A 524-amino-acid polypeptide reads, in one-letter code: 2-isopropylmalate synthase (524 aa).

The Pyruvate carboxyltransferase domain maps to 15–277 (VVIFDTTMRD…ETKIDTTHIT (263 aa)). The Mn(2+) site is built by Asp-24, His-212, His-214, and Asn-248. The segment at 401–524 (RVQRLRVVAG…RPEAAIASGF (124 aa)) is regulatory domain.

It belongs to the alpha-IPM synthase/homocitrate synthase family. LeuA type 1 subfamily. As to quaternary structure, homodimer. It depends on Mn(2+) as a cofactor.

It is found in the cytoplasm. The catalysed reaction is 3-methyl-2-oxobutanoate + acetyl-CoA + H2O = (2S)-2-isopropylmalate + CoA + H(+). Its pathway is amino-acid biosynthesis; L-leucine biosynthesis; L-leucine from 3-methyl-2-oxobutanoate: step 1/4. Catalyzes the condensation of the acetyl group of acetyl-CoA with 3-methyl-2-oxobutanoate (2-ketoisovalerate) to form 3-carboxy-3-hydroxy-4-methylpentanoate (2-isopropylmalate). The chain is 2-isopropylmalate synthase from Caulobacter sp. (strain K31).